The sequence spans 288 residues: Sulfur carrier protein FdhD (288 aa).

Residue Cys122 is the Cysteine persulfide intermediate of the active site. 268-273 contributes to the Mo-bis(molybdopterin guanine dinucleotide) binding site; sequence FVRGER.

The protein belongs to the FdhD family.

It is found in the cytoplasm. Its function is as follows. Required for formate dehydrogenase (FDH) activity. Acts as a sulfur carrier protein that transfers sulfur from IscS to the molybdenum cofactor prior to its insertion into FDH. This is Sulfur carrier protein FdhD from Anaeromyxobacter dehalogenans (strain 2CP-C).